A 341-amino-acid polypeptide reads, in one-letter code: Elongation factor Ts, mitochondrial 2 (341 aa).

The transit peptide at 1–17 (MLAARFASRAFPRTRLY) directs the protein to the mitochondrion.

Belongs to the EF-Ts family.

It is found in the mitochondrion. Functionally, associates with the EF-Tu.GDP complex and induces the exchange of GDP to GTP. It remains bound to the aminoacyl-tRNA.EF-Tu.GTP complex up to the GTP hydrolysis stage on the ribosome. The sequence is that of Elongation factor Ts, mitochondrial 2 from Postia placenta (strain ATCC 44394 / Madison 698-R) (Brown rot fungus).